Consider the following 310-residue polypeptide: Thymidine kinase (310 aa).

17–24 serves as a coordination point for ATP; that stretch reads GPFGIGKT. The Proton acceptor role is filled by Glu45. Gln86 contributes to the substrate binding site. Residue Arg176 coordinates ATP. Arg182 serves as a coordination point for substrate.

The protein belongs to the herpesviridae thymidine kinase family. As to quaternary structure, homodimer.

The catalysed reaction is thymidine + ATP = dTMP + ADP + H(+). Catalyzes the transfer of the gamma-phospho group of ATP to thymidine to generate dTMP in the salvage pathway of pyrimidine synthesis. The dTMP serves as a substrate for DNA polymerase during viral DNA replication. Allows the virus to be reactivated and to grow in non-proliferative cells lacking a high concentration of phosphorylated nucleic acid precursors. This chain is Thymidine kinase, found in Gallus gallus (Chicken).